The following is a 338-amino-acid chain: Glycerol-3-phosphate dehydrogenase [NAD(P)+] (338 aa).

Positions 13, 14, and 108 each coordinate NADPH. Sn-glycerol 3-phosphate contacts are provided by lysine 108, glycine 139, and serine 141. Alanine 143 provides a ligand contact to NADPH. Sn-glycerol 3-phosphate is bound by residues lysine 194, aspartate 247, serine 257, arginine 258, and asparagine 259. The active-site Proton acceptor is the lysine 194. Arginine 258 contributes to the NADPH binding site. Valine 282 and glutamate 284 together coordinate NADPH.

This sequence belongs to the NAD-dependent glycerol-3-phosphate dehydrogenase family.

The protein localises to the cytoplasm. The enzyme catalyses sn-glycerol 3-phosphate + NAD(+) = dihydroxyacetone phosphate + NADH + H(+). It carries out the reaction sn-glycerol 3-phosphate + NADP(+) = dihydroxyacetone phosphate + NADPH + H(+). The protein operates within membrane lipid metabolism; glycerophospholipid metabolism. In terms of biological role, catalyzes the reduction of the glycolytic intermediate dihydroxyacetone phosphate (DHAP) to sn-glycerol 3-phosphate (G3P), the key precursor for phospholipid synthesis. In Streptococcus gordonii (strain Challis / ATCC 35105 / BCRC 15272 / CH1 / DL1 / V288), this protein is Glycerol-3-phosphate dehydrogenase [NAD(P)+].